A 295-amino-acid chain; its full sequence is Small ribosomal subunit protein uS2B (295 aa).

N-acetylserine is present on serine 2. The segment at 54-113 is interaction with PPP1R16B; the sequence is TWEKLLLAARAIVAIENPADVSVISSRNTGQRAVLKFAAATGATPIAGRFTPGTFTNQIQ. Laminin-binding stretches follow at residues 161 to 180 and 205 to 229; these read IPCNNKGAHSVGLMWWMLAR and RDPEEIEKEEQAAAEKAVTKEEFQG. Residues 218–227 are compositionally biased toward basic and acidic residues; it reads AEKAVTKEEF. Positions 218–242 are disordered; that stretch reads AEKAVTKEEFQGEWTAPSPEFTATQ. 5 [DE]-W-[ST] repeats span residues 230-232, 247-249, 266-268, 275-277, and 293-295; these read EWT and DWS. The interval 242–295 is laminin-binding; that stretch reads QPEVADWSEGVQVPSVPIQQFPTEDWSAQPATEDWSAAPTAQATEWVGATTDWS. Residues 266–295 form a disordered region; it reads DWSAQPATEDWSAAPTAQATEWVGATTDWS.

It belongs to the universal ribosomal protein uS2 family. In terms of assembly, monomer (37LRP) and homodimer (67LR). Component of the small ribosomal subunit. Mature ribosomes consist of a small (40S) and a large (60S) subunit. The 40S subunit contains about 33 different proteins and 1 molecule of RNA (18S). The 60S subunit contains about 49 different proteins and 3 molecules of RNA (28S, 5.8S and 5S). Interacts with RPS21. Interacts with several laminins including at least LAMB1. Interacts with MDK. The mature dimeric form interacts with PPP1R16B (via its fourth ankyrin repeat). Interacts with PPP1CA only in the presence of PPP1R16B. Acylated. Acylation may be a prerequisite for conversion of the monomeric 37 kDa laminin receptor precursor (37LRP) to the mature dimeric 67 kDa laminin receptor (67LR), and may provide a mechanism for membrane association. Post-translationally, cleaved by stromelysin-3 (ST3) at the cell surface. Cleavage by stromelysin-3 may be a mechanism to alter cell-extracellular matrix interactions.

The protein resides in the cell membrane. It is found in the cytoplasm. Its subcellular location is the nucleus. In terms of biological role, required for the assembly and/or stability of the 40S ribosomal subunit. Required for the processing of the 20S rRNA-precursor to mature 18S rRNA in a late step of the maturation of 40S ribosomal subunits. Also functions as a cell surface receptor for laminin. Plays a role in cell adhesion to the basement membrane and in the consequent activation of signaling transduction pathways. May play a role in cell fate determination and tissue morphogenesis. Also acts as a receptor for several other ligands, including the pathogenic prion protein, viruses, and bacteria. Acts as a PPP1R16B-dependent substrate of PPP1CA. This is Small ribosomal subunit protein uS2B from Homo sapiens (Human).